A 244-amino-acid polypeptide reads, in one-letter code: Carboxy-S-adenosyl-L-methionine synthase (244 aa).

Residues Tyr-40, 65-67 (GCS), 90-91 (DN), 119-120 (DL), Asn-134, and Arg-201 contribute to the S-adenosyl-L-methionine site.

This sequence belongs to the class I-like SAM-binding methyltransferase superfamily. Cx-SAM synthase family. Homodimer.

The catalysed reaction is prephenate + S-adenosyl-L-methionine = carboxy-S-adenosyl-L-methionine + 3-phenylpyruvate + H2O. Functionally, catalyzes the conversion of S-adenosyl-L-methionine (SAM) to carboxy-S-adenosyl-L-methionine (Cx-SAM). This chain is Carboxy-S-adenosyl-L-methionine synthase, found in Geobacter metallireducens (strain ATCC 53774 / DSM 7210 / GS-15).